A 212-amino-acid polypeptide reads, in one-letter code: Thymidylate kinase (212 aa).

10–17 contributes to the ATP binding site; it reads GPDGAGKS.

This sequence belongs to the thymidylate kinase family.

The catalysed reaction is dTMP + ATP = dTDP + ADP. Its function is as follows. Phosphorylation of dTMP to form dTDP in both de novo and salvage pathways of dTTP synthesis. The polypeptide is Thymidylate kinase (Lactobacillus helveticus (strain DPC 4571)).